Reading from the N-terminus, the 155-residue chain is Myosin light chain alkali (155 aa).

2 consecutive EF-hand domains span residues 7–41 and 80–115; these read REIE…LNLN and GCYE…LGES.

Myosin is a hexamer of 2 heavy chains and 4 light chains.

In Drosophila pseudoobscura pseudoobscura (Fruit fly), this protein is Myosin light chain alkali (Mlc1).